Here is a 256-residue protein sequence, read N- to C-terminus: Chloroplastic group IIB intron splicing facilitator CRS2, chloroplastic (256 aa).

A chloroplast-targeting transit peptide spans 1 to 45; it reads MSLLAAAIPSTSSHFSAPFLPSFRMPRKSLTAPLHRIRRPRPFTV. Y74 is a binding site for tRNA. H79 functions as the Proton acceptor in the catalytic mechanism. Y124, N126, and N172 together coordinate tRNA.

This sequence belongs to the PTH family. CRS2 subfamily. As to quaternary structure, interacts with CAF1 and CAF2. Part of large ribonucleo-protein complexes that include group IIB introns and either CAF1 or CAF2.

The protein localises to the plastid. The protein resides in the chloroplast stroma. In terms of biological role, required for the splicing of group IIB introns in chloroplasts. Forms complexes with either CAF1 or CAF2 which, in turn, interact with RNA and confer intron specificity of the splicing particles. Has no peptidyl-tRNA hydrolase activity. The polypeptide is Chloroplastic group IIB intron splicing facilitator CRS2, chloroplastic (CRS2) (Zea mays (Maize)).